The following is a 163-amino-acid chain: NADH-quinone oxidoreductase subunit I (163 aa).

4Fe-4S ferredoxin-type domains lie at 53 to 83 (LRRY…IEAG) and 94 to 123 (VRYD…EGPN). Positions 63, 66, 69, 73, 103, 106, 109, and 113 each coordinate [4Fe-4S] cluster.

This sequence belongs to the complex I 23 kDa subunit family. In terms of assembly, NDH-1 is composed of 14 different subunits. Subunits NuoA, H, J, K, L, M, N constitute the membrane sector of the complex. [4Fe-4S] cluster is required as a cofactor.

The protein resides in the cell inner membrane. It carries out the reaction a quinone + NADH + 5 H(+)(in) = a quinol + NAD(+) + 4 H(+)(out). In terms of biological role, NDH-1 shuttles electrons from NADH, via FMN and iron-sulfur (Fe-S) centers, to quinones in the respiratory chain. The immediate electron acceptor for the enzyme in this species is believed to be ubiquinone. Couples the redox reaction to proton translocation (for every two electrons transferred, four hydrogen ions are translocated across the cytoplasmic membrane), and thus conserves the redox energy in a proton gradient. This is NADH-quinone oxidoreductase subunit I from Brucella melitensis biotype 1 (strain ATCC 23456 / CCUG 17765 / NCTC 10094 / 16M).